Here is a 383-residue protein sequence, read N- to C-terminus: uncharacterized protein (383 aa).

Positions 12, 18, 21, and 88 each coordinate [4Fe-4S] cluster. S-adenosyl-L-methionine-binding residues include Gln-219, Phe-246, Glu-267, and Asp-314. The Nucleophile role is filled by Cys-341.

The protein belongs to the class I-like SAM-binding methyltransferase superfamily. RNA M5U methyltransferase family.

This is an uncharacterized protein from Protochlamydia amoebophila (strain UWE25).